The primary structure comprises 417 residues: Phosphatidylcholine:ceramide cholinephosphotransferase 1 (417 aa).

The SAM domain maps to 11-74 (WSPEEVTNWL…LHMIETLKMA (64 aa)). 5 helical membrane-spanning segments follow: residues 140–160 (FLAF…ISVV), 188–208 (FSIC…QWLL), 219–239 (FFCI…VTTL), 280–300 (MCGD…YLFI), and 308–328 (LWWY…CILL). Histidine 289 is an active-site residue. The Cytoplasmic portion of the chain corresponds to 329–417 (AHDHYTVDVV…VKYSRLVNDT (89 aa)). Catalysis depends on residues histidine 332 and aspartate 336.

This sequence belongs to the sphingomyelin synthase family.

The protein localises to the golgi apparatus membrane. It catalyses the reaction an N-acylsphing-4-enine + a 1,2-diacyl-sn-glycero-3-phosphocholine = a sphingomyelin + a 1,2-diacyl-sn-glycerol. The enzyme catalyses an N-acylsphing-4-enine + a 1,2-diacyl-sn-glycero-3-phosphoethanolamine = an N-acylsphing-4-enine 1-phosphoethanolamine + a 1,2-diacyl-sn-glycerol. In terms of biological role, major sphingomyelin synthase at the Golgi apparatus. Catalyzes the reversible transfer of phosphocholine moiety in sphingomyelin biosynthesis: in the forward reaction transfers phosphocholine head group of phosphatidylcholine (PC) on to ceramide (CER) to form ceramide phosphocholine (sphingomyelin, SM) and diacylglycerol (DAG) as by-product, and in the reverse reaction transfers phosphocholine from SM to DAG to form PC and CER. The direction of the reaction depends on the levels of CER and DAG in Golgi membranes. Converts the newly synthesized CER, that is transported from the endoplasmic reticulum to the trans-Golgi by the Cer transport protein (CERT), to SM. Can form a heteromeric complex with glucosylceramide synthase (GCS) increasing SMS activity and reducing glucosylceramide synthesis, a critical mechanism that controls the metabolic fate of CER in the Golgi. Does not use free phosphorylcholine or CDP-choline as donor. Can also transfer phosphoethanolamine head group of phosphatidylethanolamine (PE) on to CER to form ceramide phosphoethanolamine (CPE). Regulates receptor-mediated signal transduction via mitogenic DAG and proapoptotic CER, as well as via SM, a structural component of membrane rafts that serve as platforms for signal transduction and protein sorting. Plays a role in secretory transport via regulation of DAG pool at the Golgi apparatus and its downstream effects on PRKD1. The polypeptide is Phosphatidylcholine:ceramide cholinephosphotransferase 1 (SGMS1) (Gallus gallus (Chicken)).